The sequence spans 336 residues: Sodium/bile acid cotransporter 7 (336 aa).

Over 1 to 10 (MGLIARVRKE) the chain is Cytoplasmic. The helical transmembrane segment at 11-31 (WFIIGIVLVITFAKLQPSVGV) threads the bilayer. At 32-37 (KGGPLH) the chain is on the extracellular side. The helical transmembrane segment at 38–58 (PEITITYVAVSVIFFNSGLSL) threads the bilayer. Topologically, residues 59 to 71 (KTEELASALMHVK) are cytoplasmic. Residues 72–92 (LHFFVQTFTLVFFPIAIWLLL) traverse the membrane as a helical segment. Residues 93 to 116 (KVLALTAINEWLLRGLQTVACMPP) are Extracellular-facing. A helical transmembrane segment spans residues 117 to 137 (PVSSAVILTKAVGGNEAAAIF). N138 is a topological domain (cytoplasmic). The chain crosses the membrane as a helical span at residues 139–159 (SAFGSFLGIVVTPLLLLVFLG). The Extracellular segment spans residues 160 to 163 (SSSS). A helical membrane pass occupies residues 164 to 184 (VPFTSIFSQLFMTVVVPLIVG). The Cytoplasmic portion of the chain corresponds to 185 to 201 (QVCRRFLRECLDRRKPP). The chain crosses the membrane as a helical span at residues 202–222 (FGAVSSVVLLMIIYSTFCDTF). Residues 223–233 (NNPNIELDHLS) are Extracellular-facing. Residues 234–254 (LLTVVFIIFSIQLSFMALIFF) form a helical membrane-spanning segment. Residues 255–270 (LSTRKSSGFSAADSVA) lie on the Cytoplasmic side of the membrane. A helical membrane pass occupies residues 271–291 (IMFCATHKSLTLGIPMLKIVF). Over 292-298 (EGYEHLS) the chain is Extracellular. A helical membrane pass occupies residues 299 to 319 (LISVPLLIYHPAQILLGSVLL). Over 320 to 336 (PSIKTWMSGRQKTLTPI) the chain is Cytoplasmic.

The protein belongs to the bile acid:sodium symporter (BASS) (TC 2.A.28) family.

It is found in the cell membrane. The protein resides in the endoplasmic reticulum membrane. It localises to the golgi apparatus membrane. Involved in teeth and skeletal development. Has an essential role in the biosynthesis and trafficking of glycosaminoglycans and glycoproteins to produce a proper functioning extracellular matrix. Required for extracellular matrix mineralization. Also involved in the regulation of cellular calcium homeostasis. Does not show transport activity towards bile acids or steroid sulfates. In Danio rerio (Zebrafish), this protein is Sodium/bile acid cotransporter 7 (slc10a7).